A 332-amino-acid chain; its full sequence is Malate dehydrogenase (332 aa).

NAD(+) contacts are provided by residues 11 to 16 (GAGNVG) and D35. R97 and R103 together coordinate substrate. Residues N110 and 133 to 135 (VTN) each bind NAD(+). Substrate contacts are provided by N135 and R166. H190 serves as the catalytic Proton acceptor.

Belongs to the LDH/MDH superfamily. MDH type 3 family.

The catalysed reaction is (S)-malate + NAD(+) = oxaloacetate + NADH + H(+). Its function is as follows. Catalyzes the reversible oxidation of malate to oxaloacetate. The protein is Malate dehydrogenase of Hydrogenobaculum sp. (strain Y04AAS1).